A 485-amino-acid polypeptide reads, in one-letter code: Cysteine--tRNA ligase (485 aa).

Position 28 (cysteine 28) interacts with Zn(2+). A 'HIGH' region motif is present at residues 30–40 (MTVYDYCHLGH). Cysteine 212, histidine 237, and glutamate 241 together coordinate Zn(2+). The 'KMSKS' region signature appears at 269 to 273 (KMSKS). An ATP-binding site is contributed by lysine 272.

Belongs to the class-I aminoacyl-tRNA synthetase family. In terms of assembly, monomer. The cofactor is Zn(2+).

The protein resides in the cytoplasm. The enzyme catalyses tRNA(Cys) + L-cysteine + ATP = L-cysteinyl-tRNA(Cys) + AMP + diphosphate. In Bordetella bronchiseptica (strain ATCC BAA-588 / NCTC 13252 / RB50) (Alcaligenes bronchisepticus), this protein is Cysteine--tRNA ligase.